Consider the following 78-residue polypeptide: Major outer membrane lipoprotein Lpp (78 aa).

The N-terminal stretch at M1–G20 is a signal peptide. The N-palmitoyl cysteine moiety is linked to residue C21. C21 carries S-diacylglycerol cysteine lipidation. 2 repeats span residues N24 to V34 and N38 to V48. Residues I27–A75 adopt a coiled-coil conformation. The residue at position 78 (K78) is an N6-murein peptidoglycan lysine.

The protein belongs to the Lpp family. As to quaternary structure, homotrimer.

The protein localises to the cell outer membrane. The protein resides in the secreted. Its subcellular location is the cell wall. A highly abundant outer membrane lipoprotein that controls the distance between the inner and outer membranes. The only protein known to be covalently linked to the peptidoglycan network (PGN). Also non-covalently binds the PGN. The link between the cell outer membrane and PGN contributes to maintenance of the structural and functional integrity of the cell envelope, and maintains the correct distance between the PGN and the outer membrane. The protein is Major outer membrane lipoprotein Lpp of Yersinia pestis.